A 190-amino-acid chain; its full sequence is Selenoprotein S (190 aa).

Residues 1 to 13 show a composition bias toward basic and acidic residues; the sequence is MEAEDGARVRNED. Positions 1 to 20 are disordered; it reads MEAEDGARVRNEDVPPQNQD. A helical membrane pass occupies residues 30–50; it reads AFMSEYGWYLLFGCVGVYLLI. Over residues 58 to 68 the composition is skewed to low complexity; the sequence is SSTQTRSSSGS. The segment at 58 to 190 is disordered; the sequence is SSTQTRSSSG…RRGPSAGGUG (133 aa). The segment covering 79 to 120 has biased composition (basic and acidic residues); it reads RRQEALEASRRRMQEEQDARAAEFREKQRMLEEEKRRQKIEM. A compositionally biased stretch (polar residues) spans 136 to 151; that stretch reads VAQQNTEEAASSSSLR. A non-standard amino acid (selenocysteine) is located at residue Sec-189.

Belongs to the selenoprotein S family.

The protein localises to the endoplasmic reticulum membrane. It localises to the cytoplasm. Involved in the degradation process of misfolded endoplasmic reticulum (ER) luminal proteins. Participates in the transfer of misfolded proteins from the ER to the cytosol, where they are destroyed by the proteasome in a ubiquitin-dependent manner. This Danio rerio (Zebrafish) protein is Selenoprotein S (vimp).